Here is a 1407-residue protein sequence, read N- to C-terminus: DNA-directed RNA polymerase subunit beta' (1407 aa).

4 residues coordinate Zn(2+): cysteine 70, cysteine 72, cysteine 85, and cysteine 88. Residues aspartate 460, aspartate 462, and aspartate 464 each coordinate Mg(2+). Positions 814, 888, 895, and 898 each coordinate Zn(2+). Lysine 972 carries the N6-acetyllysine modification.

Belongs to the RNA polymerase beta' chain family. In terms of assembly, the RNAP catalytic core consists of 2 alpha, 1 beta, 1 beta' and 1 omega subunit. When a sigma factor is associated with the core the holoenzyme is formed, which can initiate transcription. The cofactor is Mg(2+). Requires Zn(2+) as cofactor.

It carries out the reaction RNA(n) + a ribonucleoside 5'-triphosphate = RNA(n+1) + diphosphate. DNA-dependent RNA polymerase catalyzes the transcription of DNA into RNA using the four ribonucleoside triphosphates as substrates. The polypeptide is DNA-directed RNA polymerase subunit beta' (Shigella dysenteriae serotype 1 (strain Sd197)).